A 122-amino-acid chain; its full sequence is Basic phospholipase A2 F16 (122 aa).

Intrachain disulfides connect Cys-26–Cys-115, Cys-28–Cys-44, Cys-43–Cys-95, Cys-49–Cys-122, Cys-50–Cys-88, Cys-57–Cys-81, and Cys-75–Cys-86. Residues Tyr-27, Gly-29, and Gly-31 each contribute to the Ca(2+) site. Residue His-47 is part of the active site. Ca(2+) is bound at residue Asp-48. Asp-89 is a catalytic residue.

This sequence belongs to the phospholipase A2 family. Group II subfamily. D49 sub-subfamily. The cofactor is Ca(2+). Expressed by the venom gland.

The protein localises to the secreted. The catalysed reaction is a 1,2-diacyl-sn-glycero-3-phosphocholine + H2O = a 1-acyl-sn-glycero-3-phosphocholine + a fatty acid + H(+). With respect to regulation, pre-incubation with heparin markedly reduces the neurotoxicity of this toxin. In terms of biological role, snake venom phospholipase A2 (PLA2) that produces neuromuscular blockade in chick biventer cervicis preparations in the absence and presence of crotapotin. In contrast, in mouse phrenic nerve-diaphragm preparations, the neuromuscular blockade is dependent on crotapotin. PLA2 catalyzes the calcium-dependent hydrolysis of the 2-acyl groups in 3-sn-phosphoglycerides. This chain is Basic phospholipase A2 F16, found in Crotalus durissus terrificus (South American rattlesnake).